The following is a 240-amino-acid chain: MVQLWKLVLLCGLLAGTSASLPDIRGNDVLRKLKSGLERGLDTFDSTIEIIFQNLKTELESRCSDEVVEQQETENFLEQLISRIFQVVSRLTGVRIRNVQVPDITFEATSENSANVLIPITADVTVSLPFLGEIVDLDLNVDLQTTVSIETDTEDPQVVVGECTNNPESISLTVLHSRFGLVNDVVDIGVNLARRVVSSVVEGELCPRFRELLESLDAECVEKLIGESQDTTQQEPEGSR.

An N-terminal signal peptide occupies residues 1–19 (MVQLWKLVLLCGLLAGTSA). Cysteine 163 and cysteine 206 form a disulfide bridge.

It belongs to the BPI/LBP/Plunc superfamily. Plunc family. Parotid glands.

It localises to the secreted. The polypeptide is Short palate, lung and nasal epithelium carcinoma-associated protein 2B (SPLUNC2B) (Bos taurus (Bovine)).